The following is a 495-amino-acid chain: Probable cytosol aminopeptidase (495 aa).

Positions 267 and 272 each coordinate Mn(2+). Lys279 is an active-site residue. Mn(2+) is bound by residues Asp290, Asp349, and Glu351. The active site involves Arg353.

This sequence belongs to the peptidase M17 family. The cofactor is Mn(2+).

The protein resides in the cytoplasm. The enzyme catalyses Release of an N-terminal amino acid, Xaa-|-Yaa-, in which Xaa is preferably Leu, but may be other amino acids including Pro although not Arg or Lys, and Yaa may be Pro. Amino acid amides and methyl esters are also readily hydrolyzed, but rates on arylamides are exceedingly low.. The catalysed reaction is Release of an N-terminal amino acid, preferentially leucine, but not glutamic or aspartic acids.. Its function is as follows. Presumably involved in the processing and regular turnover of intracellular proteins. Catalyzes the removal of unsubstituted N-terminal amino acids from various peptides. This chain is Probable cytosol aminopeptidase, found in Histophilus somni (strain 129Pt) (Haemophilus somnus).